We begin with the raw amino-acid sequence, 178 residues long: Interleukin-10 (178 aa).

The signal sequence occupies residues 1–18; sequence MHSSALLCCLVLLTGVRA. Intrachain disulfides connect C30–C126 and C80–C132. N-linked (GlcNAc...) asparagine glycosylation is present at N134.

This sequence belongs to the IL-10 family. As to quaternary structure, homodimer. Interacts with IL10RA and IL10RB.

It localises to the secreted. Its function is as follows. Major immune regulatory cytokine that acts on many cells of the immune system where it has profound anti-inflammatory functions, limiting excessive tissue disruption caused by inflammation. Mechanistically, IL10 binds to its heterotetrameric receptor comprising IL10RA and IL10RB leading to JAK1 and STAT2-mediated phosphorylation of STAT3. In turn, STAT3 translocates to the nucleus where it drives expression of anti-inflammatory mediators. Targets antigen-presenting cells (APCs) such as macrophages and monocytes and inhibits their release of pro-inflammatory cytokines including granulocyte-macrophage colony-stimulating factor /GM-CSF, granulocyte colony-stimulating factor/G-CSF, IL-1 alpha, IL-1 beta, IL-6, IL-8 and TNF-alpha. Also interferes with antigen presentation by reducing the expression of MHC-class II and co-stimulatory molecules, thereby inhibiting their ability to induce T cell activation. In addition, controls the inflammatory response of macrophages by reprogramming essential metabolic pathways including mTOR signaling. The polypeptide is Interleukin-10 (IL10) (Pan troglodytes (Chimpanzee)).